The primary structure comprises 155 residues: Protein SREK1IP1 (155 aa).

The CCHC-type zinc finger occupies 13–30; the sequence is AGCKKCGYPGHLTFECRN. Positions 43–155 are disordered; that stretch reads DVSSTSTEDS…SSSSQSSSSD (113 aa). The span at 58 to 74 shows a compositional bias: basic and acidic residues; that stretch reads EVARAPADKKNVTDTGK. Residues 75-93 show a composition bias toward basic residues; the sequence is KKLKRKKEKKLKKHRKRLH. Residues 94–103 show a composition bias toward basic and acidic residues; the sequence is SSSESDDNSK. The segment covering 104-137 has biased composition (basic residues); it reads AKKRKSQKKEKRVKHKAKKGKQHKKDKRKEKRER. Over residues 140–155 the composition is skewed to low complexity; that stretch reads SSSSSSSSSSQSSSSD.

In terms of biological role, possible splicing regulator involved in the control of cellular survival. The polypeptide is Protein SREK1IP1 (srek1ip1) (Xenopus tropicalis (Western clawed frog)).